The following is a 516-amino-acid chain: Delta(24)-sterol reductase (516 aa).

Residues 1 to 22 (MEPAVSLAVCALLFLLWVRLKG) form the signal peptide. Residues 23–31 (LEFVLIHQR) lie on the Lumenal side of the membrane. Residues 32–52 (WVFVCLFLLPLSLIFDIYYYV) traverse the membrane as a helical segment. Topologically, residues 53–516 (RAWVVFKLSS…YDKICKAARH (464 aa)) are cytoplasmic. Positions 58-234 (FKLSSAPRLH…VAAEIRIIPA (177 aa)) constitute an FAD-binding PCMH-type domain. 163–175 (TVGGLIMGTGIES) contacts FAD.

The protein belongs to the FAD-binding oxidoreductase/transferase type 4 family. As to quaternary structure, interacts with DHCR7; this interaction regulates DHCR7 activity. FAD is required as a cofactor. Highly expressed in brain and adrenal gland with moderate expression in liver, lung, spleen, prostate and spinal cord. Low expression in heart, uterus and prostate. Undetectable in blood cells. In the brain, strongly expressed in cortical regions, substantia nigra, caudate nucleus, hippocampus, medulla oblongata and pons. In brains affected by Alzheimer disease, expression in the inferior temporal lobe is substantially lower than in the frontal cortex.

Its subcellular location is the endoplasmic reticulum membrane. The protein resides in the golgi apparatus membrane. It catalyses the reaction cholesterol + NADP(+) = desmosterol + NADPH + H(+). The catalysed reaction is lanosterol + NADPH + H(+) = 24,25-dihydrolanosterol + NADP(+). The enzyme catalyses 5alpha-cholest-8-en-3beta-ol + NADP(+) = zymosterol + NADPH + H(+). Its pathway is steroid biosynthesis; cholesterol biosynthesis. Its function is as follows. Catalyzes the reduction of the delta-24 double bond of sterol intermediates during cholesterol biosynthesis. In addition to its cholesterol-synthesizing activity, can protect cells from oxidative stress by reducing caspase 3 activity during apoptosis induced by oxidative stress. Also protects against amyloid-beta peptide-induced apoptosis. This is Delta(24)-sterol reductase (DHCR24) from Homo sapiens (Human).